The following is a 180-amino-acid chain: MIIYLHGFDSNSPGNHEKVLQLQFIDPDVRLISYSTRHPKHDMQHLLKEVDKMLQLNVDERPLICGVGLGGYWAERIGFLCDIRQVIFNPNLFPYENMEGKIDRPEEYADIATKCVTNFREKNRDRCLVILSRNDESLNSQRTSEELHHYYEIVWDEEQTHKFKNISPHLQRIKAFKTLG.

This sequence belongs to the UPF0227 family.

This chain is UPF0227 protein YcfP, found in Escherichia coli O7:K1 (strain IAI39 / ExPEC).